The chain runs to 232 residues: Ribose-5-phosphate isomerase A (232 aa).

Residues 31–34, 87–90, and 100–103 contribute to the substrate site; these read TGST, DGAD, and KGGG. The active-site Proton acceptor is glutamate 109. Substrate is bound at residue lysine 127.

It belongs to the ribose 5-phosphate isomerase family. Homodimer.

The catalysed reaction is aldehydo-D-ribose 5-phosphate = D-ribulose 5-phosphate. It functions in the pathway carbohydrate degradation; pentose phosphate pathway; D-ribose 5-phosphate from D-ribulose 5-phosphate (non-oxidative stage): step 1/1. Its function is as follows. Catalyzes the reversible conversion of ribose-5-phosphate to ribulose 5-phosphate. The sequence is that of Ribose-5-phosphate isomerase A from Bifidobacterium longum (strain DJO10A).